A 427-amino-acid chain; its full sequence is UDP-N-acetylglucosamine 1-carboxyvinyltransferase (427 aa).

Position 22–23 (22–23 (KN)) interacts with phosphoenolpyruvate. Arg99 contacts UDP-N-acetyl-alpha-D-glucosamine. The active-site Proton donor is Cys123. Cys123 is subject to 2-(S-cysteinyl)pyruvic acid O-phosphothioketal. UDP-N-acetyl-alpha-D-glucosamine is bound by residues 128–132 (RPIDL), Asp313, and Ile335.

The protein belongs to the EPSP synthase family. MurA subfamily.

The protein resides in the cytoplasm. The catalysed reaction is phosphoenolpyruvate + UDP-N-acetyl-alpha-D-glucosamine = UDP-N-acetyl-3-O-(1-carboxyvinyl)-alpha-D-glucosamine + phosphate. The protein operates within cell wall biogenesis; peptidoglycan biosynthesis. Functionally, cell wall formation. Adds enolpyruvyl to UDP-N-acetylglucosamine. This is UDP-N-acetylglucosamine 1-carboxyvinyltransferase from Sphingopyxis alaskensis (strain DSM 13593 / LMG 18877 / RB2256) (Sphingomonas alaskensis).